Here is a 446-residue protein sequence, read N- to C-terminus: WD repeat domain phosphoinositide-interacting protein 1 (446 aa).

A Nuclear receptor interaction motif is present at residues 131–136 (LLKTVL). A WD 1 repeat occupies 184 to 224 (AHEGTLAAITFNSSGSKLASASEKGTVIRVFSVPEGQKLYE). The short motif at 225–228 (FRRG) is the L/FRRG motif element. WD repeat units follow at residues 230–269 (KRYV…DSRP) and 312–351 (SGQK…GGEC). A disordered region spans residues 386–406 (ARPSTSAASTVPGYSEDGGAL).

Belongs to the WD repeat PROPPIN family. In terms of assembly, interacts with androgen receptor (AR) and the estrogen receptors ESR1 and ESR2. Interacts with WIPI2. Interacts with WDR45. Interacts with ATG16L1. May interact with NUDC.

The protein resides in the golgi apparatus. It is found in the trans-Golgi network. Its subcellular location is the endosome. It localises to the cytoplasmic vesicle. The protein localises to the clathrin-coated vesicle. The protein resides in the preautophagosomal structure membrane. It is found in the cytoplasm. Its subcellular location is the cytoskeleton. In terms of biological role, component of the autophagy machinery that controls the major intracellular degradation process by which cytoplasmic materials are packaged into autophagosomes and delivered to lysosomes for degradation. Plays an important role in starvation- and calcium-mediated autophagy, as well as in mitophagy. Functions downstream of the ULK1 and PI3-kinases that produce phosphatidylinositol 3-phosphate (PtdIns3P) on membranes of the endoplasmic reticulum once activated. Binds phosphatidylinositol 3-phosphate (PtdIns3P), and maybe other phosphoinositides including PtdIns3,5P2 and PtdIns5P, and is recruited to phagophore assembly sites at the endoplasmic reticulum membranes. There, it assists WIPI2 in the recruitment of ATG12-ATG5-ATG16L1, a complex that directly controls the elongation of the nascent autophagosomal membrane. Together with WDR45/WIPI4, promotes ATG2 (ATG2A or ATG2B)-mediated lipid transfer by enhancing ATG2-association with phosphatidylinositol 3-monophosphate (PI3P)-containing membranes. Involved in xenophagy of Staphylococcus aureus. Invading S.aureus cells become entrapped in autophagosome-like WIPI1 positive vesicles targeted for lysosomal degradation. Also plays a distinct role in controlling the transcription of melanogenic enzymes and melanosome maturation, a process that is distinct from starvation-induced autophagy. May also regulate the trafficking of proteins involved in the mannose-6-phosphate receptor (MPR) recycling pathway. The sequence is that of WD repeat domain phosphoinositide-interacting protein 1 (Wipi1) from Mus musculus (Mouse).